The primary structure comprises 239 residues: Ribosomal RNA small subunit methyltransferase G (239 aa).

S-adenosyl-L-methionine contacts are provided by residues glycine 78, phenylalanine 83, 129-130 (AE), and arginine 148.

Belongs to the methyltransferase superfamily. RNA methyltransferase RsmG family.

The protein resides in the cytoplasm. Specifically methylates the N7 position of a guanine in 16S rRNA. This chain is Ribosomal RNA small subunit methyltransferase G, found in Clostridium tetani (strain Massachusetts / E88).